A 201-amino-acid polypeptide reads, in one-letter code: Putative lipoprotein LppC (201 aa).

The first 23 residues, 1 to 23, serve as a signal peptide directing secretion; that stretch reads MTSTLHRTPLATAGLALVVALGG. Cys24 is lipidated: N-palmitoyl cysteine. The S-diacylglycerol cysteine moiety is linked to residue Cys24. 3 prevents bacterial uptake by a human macrophage-like cell line regions span residues 77–96, 97–116, and 117–136; these read GANV…AELA, LVVD…IVTG, and IAPG…GHSV. Residues 122-141 are disordered; sequence GSTADGQTPAGGHSVPNSGG.

It belongs to the UPF0098 family.

It is found in the cell membrane. The protein resides in the cell surface. Its function is as follows. Probably involved in bacterial recognition and uptake by its host (human). This is Putative lipoprotein LppC from Mycobacterium tuberculosis (strain ATCC 25618 / H37Rv).